We begin with the raw amino-acid sequence, 233 residues long: Ribonuclease 3 (233 aa).

One can recognise an RNase III domain in the interval 6–135 (QDYLAKEFNI…FIGALYLDQG (130 aa)). Glu-48 lines the Mg(2+) pocket. Asp-52 is a catalytic residue. The Mg(2+) site is built by Asp-121 and Glu-124. Residue Glu-124 is part of the active site. Residues 161 to 230 (DAKTSLQEFL…AQQALDNMRN (70 aa)) enclose the DRBM domain. The segment at 205-233 (IGEGKGSSKKHAEMQAAQQALDNMRNKNK) is disordered.

Belongs to the ribonuclease III family. Homodimer. Requires Mg(2+) as cofactor.

It is found in the cytoplasm. It catalyses the reaction Endonucleolytic cleavage to 5'-phosphomonoester.. Digests double-stranded RNA. Involved in the processing of primary rRNA transcript to yield the immediate precursors to the large and small rRNAs (23S and 16S). Processes some mRNAs, and tRNAs when they are encoded in the rRNA operon. Processes pre-crRNA and tracrRNA of type II CRISPR loci if present in the organism. The protein is Ribonuclease 3 of Limosilactobacillus reuteri (strain DSM 20016) (Lactobacillus reuteri).